The sequence spans 45 residues: Mu-conotoxin-like Cal 12.1.2e (45 aa).

Cystine bridges form between Cys3–Cys16, Cys11–Cys28, Cys18–Cys33, and Cys27–Cys39. Residue Trp17 is modified to 6'-bromotryptophan. Pro23 is modified (4-hydroxyproline). The residue at position 38 (Trp38) is a 6'-bromotryptophan. Pro40 is modified (4-hydroxyproline).

As to expression, expressed by the venom duct.

Its subcellular location is the secreted. Mu-conotoxins block voltage-gated sodium channels. This toxin reversibly blocks voltage-gated sodium channel in cephalopods, with no alteration in the voltage dependence of sodium conductance or on the kinetics of inactivation. The sequence is that of Mu-conotoxin-like Cal 12.1.2e from Californiconus californicus (California cone).